The sequence spans 1102 residues: GPI inositol-deacylase (1102 aa).

The segment at 1–90 (MHRRSSGSPV…NPPDCKSSSV (90 aa)) is disordered. The span at 58–70 (GASTPRSRNSSMW) shows a compositional bias: polar residues. An N-linked (GlcNAc...) asparagine glycan is attached at N66. Residues 72–83 (TPPSSSMTSNPP) show a composition bias toward low complexity. Residues 121 to 141 (PCSILTAFTTLVASIFLFFIL) form a helical membrane-spanning segment. Residue S308 is part of the active site. The next 2 membrane-spanning stretches (helical) occupy residues 744–764 (LVMR…ALVM) and 790–810 (SSLP…ATST). N824 is a glycosylation site (N-linked (GlcNAc...) asparagine). Helical transmembrane passes span 867–887 (VALA…SKSG), 914–934 (ILLA…VACI), 964–984 (SIFL…LVWA), 1001–1021 (VLSI…TMIP), 1033–1053 (MLFF…AYLL), and 1056–1076 (LTNI…GFSL).

The protein belongs to the GPI inositol-deacylase family.

The protein localises to the endoplasmic reticulum membrane. Its function is as follows. Involved in inositol deacylation of GPI-anchored proteins which plays important roles in the quality control and ER-associated degradation of GPI-anchored proteins. This is GPI inositol-deacylase (bst1) from Aspergillus oryzae (strain ATCC 42149 / RIB 40) (Yellow koji mold).